A 230-amino-acid chain; its full sequence is Protein GrpE (230 aa).

Disordered stretches follow at residues 1 to 26 and 209 to 230; these read MADE…DREA and GVSK…EDNA. Residues 221-230 are compositionally biased toward polar residues; sequence NGASTSEDNA.

It belongs to the GrpE family. In terms of assembly, homodimer.

Its subcellular location is the cytoplasm. Participates actively in the response to hyperosmotic and heat shock by preventing the aggregation of stress-denatured proteins, in association with DnaK and GrpE. It is the nucleotide exchange factor for DnaK and may function as a thermosensor. Unfolded proteins bind initially to DnaJ; upon interaction with the DnaJ-bound protein, DnaK hydrolyzes its bound ATP, resulting in the formation of a stable complex. GrpE releases ADP from DnaK; ATP binding to DnaK triggers the release of the substrate protein, thus completing the reaction cycle. Several rounds of ATP-dependent interactions between DnaJ, DnaK and GrpE are required for fully efficient folding. The chain is Protein GrpE from Brucella suis biovar 1 (strain 1330).